The primary structure comprises 326 residues: D-amino-acid oxidase (326 aa).

The FAD site is built by glycine 14, valine 15, isoleucine 16, aspartate 36, serine 44, alanine 48, alanine 49, isoleucine 50, and valine 157. The D-proline site is built by tyrosine 219 and arginine 274. D-serine contacts are provided by tyrosine 219 and arginine 274. FAD contacts are provided by arginine 274, glycine 299, glycine 300, glycine 302, and threonine 304. Glycine 300 contacts D-proline. Glycine 300 is a binding site for D-serine.

Belongs to the DAMOX/DASOX family. As to quaternary structure, homodimer. FAD serves as cofactor.

Its subcellular location is the cytoplasm. It is found in the secreted. The protein resides in the cell wall. The enzyme catalyses a D-alpha-amino acid + O2 + H2O = a 2-oxocarboxylate + H2O2 + NH4(+). The catalysed reaction is D-phenylalanine + O2 + H2O = 3-phenylpyruvate + H2O2 + NH4(+). It catalyses the reaction D-lysine + O2 + H2O = 6-amino-2-oxohexanoate + H2O2 + NH4(+). It carries out the reaction D-methionine + O2 + H2O = 4-methylsulfanyl-2-oxobutanoate + H2O2 + NH4(+). The enzyme catalyses D-arginine + O2 + H2O = 5-guanidino-2-oxopentanoate + H2O2 + NH4(+). The catalysed reaction is D-ornithine + O2 + H2O = 5-amino-2-oxopentanoate + H2O2 + NH4(+). It catalyses the reaction D-leucine + O2 + H2O = 4-methyl-2-oxopentanoate + H2O2 + NH4(+). It carries out the reaction D-alanine + O2 + H2O = pyruvate + H2O2 + NH4(+). The enzyme catalyses D-valine + O2 + H2O = 3-methyl-2-oxobutanoate + H2O2 + NH4(+). The catalysed reaction is D-histidine + O2 + H2O = 3-(imidazol-5-yl)pyruvate + H2O2 + NH4(+). Its function is as follows. Catalyzes the oxidative deamination of D-amino acids with broad substrate specificity. The protein is D-amino-acid oxidase of Glutamicibacter protophormiae (Brevibacterium protophormiae).